The sequence spans 340 residues: Entry-fusion complex protein OPG094 (340 aa).

The tract at residues Met1–Thr20 is disordered. Gly2 carries the N-myristoyl glycine; by host lipid modification. Over Gly2–Asp319 the chain is Virion surface. Residues Leu320 to Ile340 form a helical; Signal-anchor for type II membrane protein membrane-spanning segment.

The protein belongs to the orthopoxvirus OPG086 family. As to quaternary structure, interacts with OPG143. Component of the entry fusion complex (EFC) composed of OPG053, OPG076, OPG086, OPG094, OPG095, OPG099, OPG107, OPG143, OPG104, OPG147 and OPG155. Except for OPG095 and OPG053, each of the EFC proteins is required for assembly or stability of the complex. In terms of processing, unglycosylated because produced in viral factories instead of the classic ER -Golgi route.

It localises to the virion membrane. In terms of biological role, component of the entry fusion complex (EFC), which consists of 11 proteins. During cell infection, this complex mediates entry of the virion core into the host cytoplasm by a two-step mechanism consisting of lipid mixing of the viral and cellular membranes and subsequent pore formation. The sequence is that of Entry-fusion complex protein OPG094 (OPG094) from Homo sapiens (Human).